The following is a 122-amino-acid chain: Large ribosomal subunit protein uL14 (122 aa).

This sequence belongs to the universal ribosomal protein uL14 family. Part of the 50S ribosomal subunit. Forms a cluster with proteins L3 and L19. In the 70S ribosome, L14 and L19 interact and together make contacts with the 16S rRNA in bridges B5 and B8.

Its function is as follows. Binds to 23S rRNA. Forms part of two intersubunit bridges in the 70S ribosome. In Rickettsia typhi (strain ATCC VR-144 / Wilmington), this protein is Large ribosomal subunit protein uL14.